The primary structure comprises 116 residues: Large ribosomal subunit protein bL19 (116 aa).

This sequence belongs to the bacterial ribosomal protein bL19 family.

This protein is located at the 30S-50S ribosomal subunit interface and may play a role in the structure and function of the aminoacyl-tRNA binding site. The chain is Large ribosomal subunit protein bL19 from Fusobacterium nucleatum subsp. nucleatum (strain ATCC 25586 / DSM 15643 / BCRC 10681 / CIP 101130 / JCM 8532 / KCTC 2640 / LMG 13131 / VPI 4355).